A 265-amino-acid chain; its full sequence is Interleukin-1 alpha (265 aa).

Residues M1 to R108 constitute a propeptide that is removed on maturation. Position 78 is an N6-acetyllysine (K78). Residues K78–L82 form a nuclear localization signal (NLS) region. S83 carries the phosphoserine modification. N-linked (GlcNAc...) asparagine glycosylation is found at N98 and N137.

Belongs to the IL-1 family. In terms of assembly, monomer. Interacts with TMED10; the interaction mediates the translocation from the cytoplasm into the ERGIC (endoplasmic reticulum-Golgi intermediate compartment) and thereby secretion. Interacts with IL1R1. Interacts with S100A13; this interaction is the first step in the export of IL1A, followed by direct translocation of this complex across the plasma membrane. Acetylated within its nuclear localization sequence, which impacts subcellular localization. In terms of processing, proteolytic processed by CAPN1 in a calcium-dependent manner. Cleavage from 31 kDa precursor to 18 kDa biologically active molecules. Post-translationally, phosphorylated. Phosphorylation greatly enhances susceptibility to digestion and promotes the conversion of pre-IL1A alpha to the biologically active IL1A.

Its subcellular location is the nucleus. It is found in the cytoplasm. The protein resides in the secreted. Its function is as follows. Cytokine constitutively present intracellularly in nearly all resting non-hematopoietic cells that plays an important role in inflammation and bridges the innate and adaptive immune systems. After binding to its receptor IL1R1 together with its accessory protein IL1RAP, forms the high affinity interleukin-1 receptor complex. Signaling involves the recruitment of adapter molecules such as MYD88, IRAK1 or IRAK4. In turn, mediates the activation of NF-kappa-B and the three MAPK pathways p38, p42/p44 and JNK pathways. Within the cell, acts as an alarmin and cell death results in its liberation in the extracellular space after disruption of the cell membrane to induce inflammation and alert the host to injury or damage. In addition to its role as a danger signal, which occurs when the cytokine is passively released by cell necrosis, directly senses DNA damage and acts as signal for genotoxic stress without loss of cell integrity. The chain is Interleukin-1 alpha (IL1A) from Canis lupus familiaris (Dog).